The sequence spans 45 residues: FKBP-type peptidyl-prolyl cis-trans isomerase, chloroplastic (45 aa).

Belongs to the FKBP-type PPIase family. As to expression, expressed in leaves, but not in roots.

It localises to the plastid. Its subcellular location is the chloroplast thylakoid lumen. It carries out the reaction [protein]-peptidylproline (omega=180) = [protein]-peptidylproline (omega=0). In terms of biological role, PPIases accelerate the folding of proteins. It catalyzes the cis-trans isomerization of proline imidic peptide bonds in oligopeptides. This chain is FKBP-type peptidyl-prolyl cis-trans isomerase, chloroplastic, found in Vicia faba (Broad bean).